The sequence spans 217 residues: Mucosal pentraxin (217 aa).

The N-terminal stretch at 1-19 is a signal peptide; it reads MEKLLLGVLLLAFLPEGMT. In terms of domain architecture, Pentraxin (PTX) spans 24-217; it reads RGKVFIFPEQ…KGYVVVKPKL (194 aa). Cysteine 55 and cysteine 114 are oxidised to a cystine. Residues aspartate 77, asparagine 78, glutamate 155, glutamine 156, aspartate 157, and glutamine 167 each contribute to the Ca(2+) site.

It belongs to the pentraxin family. Homopentamer. Pentraxin (or pentaxin) have a discoid arrangement of 5 non-covalently bound subunits. Requires Ca(2+) as cofactor.

The protein resides in the secreted. The polypeptide is Mucosal pentraxin (MPTX) (Bos taurus (Bovine)).